The sequence spans 381 residues: Hps1-dma1 cluster transcription factor tfc7 (381 aa).

The segment at residues 10-37 (CDHCSATKIKCTQERPQCTRCRALGRDC) is a DNA-binding region (zn(2)-C6 fungal-type). The disordered stretch occupies residues 41-88 (RSLRAGKPPRSSQGLNRKISNAPVLPRQNTPVSNPTSMSSKPEHWPTM). 2 stretches are compositionally biased toward polar residues: residues 50 to 59 (RSSQGLNRKI) and 67 to 80 (RQNT…SMSS).

Its subcellular location is the nucleus. Transcription factor that regulates the expression of the hps1-dma1 gene cluster that probably mediates the biosynthesis a derivative of cyclopiazonic acid (CPA). Further studies are required to whether the CPA-like hps1-dma1 cluster is functional or a non-functional relic reflecting evolution of D.septosporum. This chain is Hps1-dma1 cluster transcription factor tfc7 (tfc7), found in Dothistroma septosporum (strain NZE10 / CBS 128990) (Red band needle blight fungus).